Here is a 338-residue protein sequence, read N- to C-terminus: Tryptophan--tRNA ligase (338 aa).

Residues 11-13 (QPS) and 19-20 (GN) contribute to the ATP site. A 'HIGH' region motif is present at residues 12 to 20 (PSGELSIGN). D135 provides a ligand contact to L-tryptophan. ATP is bound by residues 147 to 149 (GSD), V189, and 198 to 202 (KMSKS). The 'KMSKS' region signature appears at 198–202 (KMSKS).

Belongs to the class-I aminoacyl-tRNA synthetase family. As to quaternary structure, homodimer.

Its subcellular location is the cytoplasm. The enzyme catalyses tRNA(Trp) + L-tryptophan + ATP = L-tryptophyl-tRNA(Trp) + AMP + diphosphate + H(+). Its function is as follows. Catalyzes the attachment of tryptophan to tRNA(Trp). The sequence is that of Tryptophan--tRNA ligase from Vibrio cholerae serotype O1 (strain ATCC 39315 / El Tor Inaba N16961).